Here is a 127-residue protein sequence, read N- to C-terminus: MARVTNSPASRKRRKKVLKYAKGYFGSKSKLYRYAKEAVQHAWQYAYDHRRKKKSDFRALWIVRVNAACRNAGISYSRFMEGLKAANIALDRKVLADLAVRDEAGFNVLVKQAQDALKTKAASAKKA.

Belongs to the bacterial ribosomal protein bL20 family.

Its function is as follows. Binds directly to 23S ribosomal RNA and is necessary for the in vitro assembly process of the 50S ribosomal subunit. It is not involved in the protein synthesizing functions of that subunit. This Opitutus terrae (strain DSM 11246 / JCM 15787 / PB90-1) protein is Large ribosomal subunit protein bL20.